Here is a 232-residue protein sequence, read N- to C-terminus: Flagellar L-ring protein (232 aa).

An N-terminal signal peptide occupies residues 1 to 15 (MKKVLFYVLPFAFFG). The N-palmitoyl cysteine moiety is linked to residue Cys-16. Cys-16 is lipidated: S-diacylglycerol cysteine.

Belongs to the FlgH family. In terms of assembly, the basal body constitutes a major portion of the flagellar organelle and consists of four rings (L,P,S, and M) mounted on a central rod.

It is found in the cell outer membrane. It localises to the bacterial flagellum basal body. In terms of biological role, assembles around the rod to form the L-ring and probably protects the motor/basal body from shearing forces during rotation. The polypeptide is Flagellar L-ring protein (Campylobacter jejuni subsp. jejuni serotype O:23/36 (strain 81-176)).